Here is a 334-residue protein sequence, read N- to C-terminus: Glycerol-1-phosphate dehydrogenase [NAD(P)+] (334 aa).

NAD(+)-binding positions include 77 to 81 (GRPID) and 99 to 102 (TTAS). Residue D104 coordinates substrate. NAD(+) is bound at residue S108. D147 is a substrate binding site. 2 residues coordinate Zn(2+): D147 and H225. Residue H229 coordinates substrate. H246 provides a ligand contact to Zn(2+).

It belongs to the glycerol-1-phosphate dehydrogenase family. The cofactor is Zn(2+).

It localises to the cytoplasm. It catalyses the reaction sn-glycerol 1-phosphate + NAD(+) = dihydroxyacetone phosphate + NADH + H(+). It carries out the reaction sn-glycerol 1-phosphate + NADP(+) = dihydroxyacetone phosphate + NADPH + H(+). It functions in the pathway membrane lipid metabolism; glycerophospholipid metabolism. In terms of biological role, catalyzes the NAD(P)H-dependent reduction of dihydroxyacetonephosphate (DHAP or glycerone phosphate) to glycerol 1-phosphate (G1P). The G1P thus generated is used as the glycerophosphate backbone of phospholipids in the cellular membranes of Archaea. The polypeptide is Glycerol-1-phosphate dehydrogenase [NAD(P)+] (Methanococcus maripaludis (strain DSM 14266 / JCM 13030 / NBRC 101832 / S2 / LL)).